Here is a 215-residue protein sequence, read N- to C-terminus: Probable transaldolase (215 aa).

The active-site Schiff-base intermediate with substrate is the lysine 83.

Belongs to the transaldolase family. Type 3B subfamily.

The protein resides in the cytoplasm. It catalyses the reaction D-sedoheptulose 7-phosphate + D-glyceraldehyde 3-phosphate = D-erythrose 4-phosphate + beta-D-fructose 6-phosphate. It participates in carbohydrate degradation; pentose phosphate pathway; D-glyceraldehyde 3-phosphate and beta-D-fructose 6-phosphate from D-ribose 5-phosphate and D-xylulose 5-phosphate (non-oxidative stage): step 2/3. Transaldolase is important for the balance of metabolites in the pentose-phosphate pathway. The sequence is that of Probable transaldolase (tal) from Clostridium acetobutylicum (strain ATCC 824 / DSM 792 / JCM 1419 / IAM 19013 / LMG 5710 / NBRC 13948 / NRRL B-527 / VKM B-1787 / 2291 / W).